We begin with the raw amino-acid sequence, 337 residues long: N-acetyl-gamma-glutamyl-phosphate reductase (337 aa).

C145 is a catalytic residue.

It belongs to the NAGSA dehydrogenase family. Type 1 subfamily.

The protein resides in the cytoplasm. The enzyme catalyses N-acetyl-L-glutamate 5-semialdehyde + phosphate + NADP(+) = N-acetyl-L-glutamyl 5-phosphate + NADPH + H(+). The protein operates within amino-acid biosynthesis; L-arginine biosynthesis; N(2)-acetyl-L-ornithine from L-glutamate: step 3/4. Its function is as follows. Catalyzes the NADPH-dependent reduction of N-acetyl-5-glutamyl phosphate to yield N-acetyl-L-glutamate 5-semialdehyde. This chain is N-acetyl-gamma-glutamyl-phosphate reductase, found in Methanosarcina barkeri (strain Fusaro / DSM 804).